The sequence spans 132 residues: Small ribosomal subunit protein uS8c (132 aa).

It belongs to the universal ribosomal protein uS8 family. In terms of assembly, part of the 30S ribosomal subunit.

It localises to the plastid. Its subcellular location is the chloroplast. Functionally, one of the primary rRNA binding proteins, it binds directly to 16S rRNA central domain where it helps coordinate assembly of the platform of the 30S subunit. The protein is Small ribosomal subunit protein uS8c (rps8) of Drimys granadensis.